A 154-amino-acid chain; its full sequence is Aspartate 1-decarboxylase 1 (154 aa).

Catalysis depends on serine 26, which acts as the Schiff-base intermediate with substrate; via pyruvic acid. A Pyruvic acid (Ser) modification is found at serine 26. A substrate-binding site is contributed by threonine 58. Catalysis depends on tyrosine 59, which acts as the Proton donor. 74–76 (GAA) lines the substrate pocket. The tract at residues 129 to 154 (VGLVRGDTNSPQPSLSEQAGDPRRAQ) is disordered. Over residues 135–145 (DTNSPQPSLSE) the composition is skewed to polar residues.

The protein belongs to the PanD family. Heterooctamer of four alpha and four beta subunits. The cofactor is pyruvate. Post-translationally, is synthesized initially as an inactive proenzyme, which is activated by self-cleavage at a specific serine bond to produce a beta-subunit with a hydroxyl group at its C-terminus and an alpha-subunit with a pyruvoyl group at its N-terminus.

The protein localises to the cytoplasm. The catalysed reaction is L-aspartate + H(+) = beta-alanine + CO2. It functions in the pathway cofactor biosynthesis; (R)-pantothenate biosynthesis; beta-alanine from L-aspartate: step 1/1. Functionally, catalyzes the pyruvoyl-dependent decarboxylation of aspartate to produce beta-alanine. This Frankia casuarinae (strain DSM 45818 / CECT 9043 / HFP020203 / CcI3) protein is Aspartate 1-decarboxylase 1.